We begin with the raw amino-acid sequence, 142 residues long: Ribosomal RNA large subunit methyltransferase H (142 aa).

S-adenosyl-L-methionine-binding residues include leucine 55 and glycine 87.

The protein belongs to the RNA methyltransferase RlmH family. Homodimer.

The protein localises to the cytoplasm. The catalysed reaction is pseudouridine(1915) in 23S rRNA + S-adenosyl-L-methionine = N(3)-methylpseudouridine(1915) in 23S rRNA + S-adenosyl-L-homocysteine + H(+). In terms of biological role, specifically methylates the pseudouridine at position 1915 (m3Psi1915) in 23S rRNA. The polypeptide is Ribosomal RNA large subunit methyltransferase H (Sphingopyxis alaskensis (strain DSM 13593 / LMG 18877 / RB2256) (Sphingomonas alaskensis)).